The chain runs to 521 residues: Type-2 serine--tRNA ligase (521 aa).

Ala-316 is an L-serine binding site. A Zn(2+)-binding site is contributed by Cys-318. Arg-347 lines the L-serine pocket. ATP contacts are provided by residues 347 to 349 (RWE) and 358 to 359 (RV). Residue 364-366 (RVE) participates in L-serine binding. Zn(2+) contacts are provided by Glu-366 and Cys-473. Residue Arg-480 coordinates ATP.

Belongs to the class-II aminoacyl-tRNA synthetase family. Type-2 seryl-tRNA synthetase subfamily. In terms of assembly, homodimer. The cofactor is Zn(2+).

The protein localises to the cytoplasm. It catalyses the reaction tRNA(Ser) + L-serine + ATP = L-seryl-tRNA(Ser) + AMP + diphosphate + H(+). The enzyme catalyses tRNA(Sec) + L-serine + ATP = L-seryl-tRNA(Sec) + AMP + diphosphate + H(+). It functions in the pathway aminoacyl-tRNA biosynthesis; selenocysteinyl-tRNA(Sec) biosynthesis; L-seryl-tRNA(Sec) from L-serine and tRNA(Sec): step 1/1. In terms of biological role, catalyzes the attachment of serine to tRNA(Ser). Is also able to aminoacylate tRNA(Sec) with serine, to form the misacylated tRNA L-seryl-tRNA(Sec), which will be further converted into selenocysteinyl-tRNA(Sec). This Methanocaldococcus jannaschii (strain ATCC 43067 / DSM 2661 / JAL-1 / JCM 10045 / NBRC 100440) (Methanococcus jannaschii) protein is Type-2 serine--tRNA ligase (serS).